Reading from the N-terminus, the 372-residue chain is Cytochrome b (372 aa).

Helical transmembrane passes span 25 to 45, 69 to 90, 105 to 125, and 170 to 190; these read FGSMLLTCLALQTMTGFFLAI, WMMQNLHAIGASMFFICIYIHI, WLSGTTLLIILMATAFFGYVL, and FFALHFILPFTIISMSSIHIM. Residues His75 and His89 each coordinate heme b. 2 residues coordinate heme b: His174 and His188. His193 lines the a ubiquinone pocket. 4 consecutive transmembrane segments (helical) span residues 218–238, 280–300, 312–332, and 339–358; these read HKDMLMLTIMMTALFIIMSFM, LGGTVALVLSVTILMTMPFTH, LMQFMFWTLVATFITITWAAT, and FTTIGQATAILYFTFFIMNP.

Belongs to the cytochrome b family. As to quaternary structure, the cytochrome bc1 complex contains 3 respiratory subunits (MT-CYB, CYC1 and UQCRFS1), 2 core proteins (UQCRC1 and UQCRC2) and probably 6 low-molecular weight proteins. Heme b serves as cofactor.

It is found in the mitochondrion inner membrane. In terms of biological role, component of the ubiquinol-cytochrome c reductase complex (complex III or cytochrome b-c1 complex) that is part of the mitochondrial respiratory chain. The b-c1 complex mediates electron transfer from ubiquinol to cytochrome c. Contributes to the generation of a proton gradient across the mitochondrial membrane that is then used for ATP synthesis. The sequence is that of Cytochrome b (MT-CYB) from Pantherophis obsoletus (Black ratsnake).